Consider the following 137-residue polypeptide: Probable Hsp20 family chaperone (137 aa).

The sHSP domain occupies 25-137 (LTNNNNIMKT…PKEKHYIKLN (113 aa)).

This sequence belongs to the small heat shock protein (HSP20) family.

In terms of biological role, probable chaperone. The chain is Probable Hsp20 family chaperone from Onion yellows phytoplasma (strain OY-M).